Consider the following 120-residue polypeptide: NAD(P)H-quinone oxidoreductase subunit 3, chloroplastic (120 aa).

3 consecutive transmembrane segments (helical) span residues 10–30 (LWFF…ISEI), 64–84 (MFAL…PWAI), and 89–109 (LGIS…VGLV).

Belongs to the complex I subunit 3 family. NDH is composed of at least 16 different subunits, 5 of which are encoded in the nucleus.

The protein resides in the plastid. It is found in the chloroplast thylakoid membrane. It carries out the reaction a plastoquinone + NADH + (n+1) H(+)(in) = a plastoquinol + NAD(+) + n H(+)(out). The enzyme catalyses a plastoquinone + NADPH + (n+1) H(+)(in) = a plastoquinol + NADP(+) + n H(+)(out). In terms of biological role, NDH shuttles electrons from NAD(P)H:plastoquinone, via FMN and iron-sulfur (Fe-S) centers, to quinones in the photosynthetic chain and possibly in a chloroplast respiratory chain. The immediate electron acceptor for the enzyme in this species is believed to be plastoquinone. Couples the redox reaction to proton translocation, and thus conserves the redox energy in a proton gradient. The protein is NAD(P)H-quinone oxidoreductase subunit 3, chloroplastic of Chara vulgaris (Common stonewort).